We begin with the raw amino-acid sequence, 909 residues long: Phosphoenolpyruvate carboxylase (909 aa).

Catalysis depends on residues histidine 151 and lysine 578.

Belongs to the PEPCase type 1 family. Mg(2+) is required as a cofactor.

It catalyses the reaction oxaloacetate + phosphate = phosphoenolpyruvate + hydrogencarbonate. Forms oxaloacetate, a four-carbon dicarboxylic acid source for the tricarboxylic acid cycle. The sequence is that of Phosphoenolpyruvate carboxylase from Caulobacter vibrioides (strain ATCC 19089 / CIP 103742 / CB 15) (Caulobacter crescentus).